A 977-amino-acid chain; its full sequence is Kinesin-like protein KIN-14D (977 aa).

Low complexity predominate over residues 1–13; it reads MSSSNNAAAAAAS. The segment at 1–20 is disordered; it reads MSSSNNAAAAAASPDPSRRR. Residues 17-118 form the Calponin-homology (CH) domain; sequence SRRREDVVGW…CILALKDRFG (102 aa). Residues 297–384 adopt a coiled-coil conformation; that stretch reads KAEETQRIED…TKRRIELEEL (88 aa). Positions 472–800 constitute a Kinesin motor domain; the sequence is NIRVYCRIRP…LKFAERVSGV (329 aa). 556 to 563 serves as a coordination point for ATP; it reads GQTGSGKT. A coiled-coil region spans residues 812 to 847; the sequence is KEGKDVKELMDQLSLLKDTISKKDEEIDRLQLLNSS. The interval 852–977 is disordered; it reads PTRQADSVLK…RNNSTLKRGP (126 aa). 2 stretches are compositionally biased toward polar residues: residues 861-879 and 956-977; these read KHSSSSPGITSLGKGTSVG and RKSSTSQATPLARNNSTLKRGP.

Belongs to the TRAFAC class myosin-kinesin ATPase superfamily. Kinesin family. KIN-14 subfamily.

This is Kinesin-like protein KIN-14D from Oryza sativa subsp. japonica (Rice).